An 86-amino-acid chain; its full sequence is Small ribosomal subunit protein uS15 (86 aa).

Belongs to the universal ribosomal protein uS15 family. In terms of assembly, part of the 30S ribosomal subunit. Forms a bridge to the 50S subunit in the 70S ribosome, contacting the 23S rRNA.

Functionally, one of the primary rRNA binding proteins, it binds directly to 16S rRNA where it helps nucleate assembly of the platform of the 30S subunit by binding and bridging several RNA helices of the 16S rRNA. Forms an intersubunit bridge (bridge B4) with the 23S rRNA of the 50S subunit in the ribosome. The chain is Small ribosomal subunit protein uS15 from Mycoplasma pneumoniae (strain ATCC 29342 / M129 / Subtype 1) (Mycoplasmoides pneumoniae).